The sequence spans 873 residues: Zinc finger X-linked protein ZXDB (873 aa).

Disordered stretches follow at residues 1 to 23, 48 to 120, 138 to 184, 240 to 259, and 301 to 330; these read MEIP…GCPA, RGAQ…GGSR, VETV…LSAV, EPGV…GALI, and AEPA…GPAG. Gly residues-rich tracts occupy residues 14 to 23 and 85 to 120; these read QGAGGGGCPA and SGGG…GGSR. R89 carries the omega-N-methylarginine modification. Residues 150–165 are compositionally biased toward basic and acidic residues; that stretch reads VRREEAGAGPRPERRQ. A compositionally biased stretch (pro residues) spans 240-255; that stretch reads EPGVAPFPQPQPPPQP. Residues 316–327 are compositionally biased toward low complexity; sequence APAAAAAQSPRG. C2H2-type zinc fingers lie at residues 340 to 364, 373 to 397, 403 to 427, 433 to 455, 462 to 486, 493 to 517, 523 to 547, 553 to 577, 583 to 607, and 616 to 641; these read YLCP…LLTH, FKCP…LQSH, FGCP…MKGH, FKCE…QRSH, YQCA…NRAH, FACS…LRSH, FLCD…KRKH, FTCP…SITH, FVCP…SKKH, and SRCP…TKRH. The tract at residues 340 to 646 is required for interaction with ZXDC; the sequence is YLCPEAQCGQ…MTKRHNLSQD (307 aa). The segment at 645–776 is required for transcriptional activation; that stretch reads QDLLAQLEAA…DMDDVSAGNV (132 aa).

The protein belongs to the ZXD family. As to quaternary structure, self-associates. Interacts with ZXDC and CIITA.

Its subcellular location is the nucleus. Its function is as follows. Cooperates with CIITA to promote transcription of MHC class I and MHC class II genes. The polypeptide is Zinc finger X-linked protein ZXDB (Zxdb) (Mus musculus (Mouse)).